We begin with the raw amino-acid sequence, 305 residues long: UDP-3-O-acyl-N-acetylglucosamine deacetylase (305 aa).

Residues H79, H238, and D242 each contribute to the Zn(2+) site. H265 (proton donor) is an active-site residue.

This sequence belongs to the LpxC family. Zn(2+) is required as a cofactor.

The catalysed reaction is a UDP-3-O-[(3R)-3-hydroxyacyl]-N-acetyl-alpha-D-glucosamine + H2O = a UDP-3-O-[(3R)-3-hydroxyacyl]-alpha-D-glucosamine + acetate. The protein operates within glycolipid biosynthesis; lipid IV(A) biosynthesis; lipid IV(A) from (3R)-3-hydroxytetradecanoyl-[acyl-carrier-protein] and UDP-N-acetyl-alpha-D-glucosamine: step 2/6. Catalyzes the hydrolysis of UDP-3-O-myristoyl-N-acetylglucosamine to form UDP-3-O-myristoylglucosamine and acetate, the committed step in lipid A biosynthesis. The polypeptide is UDP-3-O-acyl-N-acetylglucosamine deacetylase (Aliivibrio fischeri (strain ATCC 700601 / ES114) (Vibrio fischeri)).